We begin with the raw amino-acid sequence, 116 residues long: Beta-2-microglobulin (116 aa).

A signal peptide spans 1-19 (MRALITFALLCLLYITVQG). The Ig-like C1-type domain maps to 24–111 (PKVHVYSHFP…RHMKETKKFS (88 aa)). C44 and C99 are joined by a disulfide.

This sequence belongs to the beta-2-microglobulin family. As to quaternary structure, heterodimer of an alpha chain and a beta chain. Beta-2-microglobulin is the beta-chain of major histocompatibility complex class I molecules.

Its subcellular location is the secreted. In terms of biological role, component of the class I major histocompatibility complex (MHC). Involved in the presentation of peptide antigens to the immune system. The chain is Beta-2-microglobulin (b2m) from Danio rerio (Zebrafish).